The sequence spans 354 residues: Protein CbrA (354 aa).

The protein belongs to the CbrA family.

This is Protein CbrA (cbrA) from Escherichia coli (strain K12).